The chain runs to 275 residues: uncharacterized protein (275 aa).

NAD(+) is bound by residues 20–22 (RAQ), 41–42 (DI), 80–81 (DI), and asparagine 107. Serine 160 serves as a coordination point for substrate. Tyrosine 173 serves as the catalytic Proton acceptor. Residues lysine 177 and 206–208 (VDT) each bind NAD(+).

Belongs to the short-chain dehydrogenases/reductases (SDR) family.

This is an uncharacterized protein from Mycobacterium tuberculosis (strain CDC 1551 / Oshkosh).